The chain runs to 327 residues: Dolichyl-phosphate beta-glucosyltransferase (327 aa).

At 1–15 (MIDLFINIASFTIYG) the chain is on the lumenal side. Residues 16–36 (IPVIPLFIIVFVILSYYLLLL) traverse the membrane as a helical segment. Topologically, residues 37–327 (HDESPLWLEK…YLLGIWKIKS (291 aa)) are cytoplasmic.

The protein belongs to the glycosyltransferase 2 family.

The protein localises to the endoplasmic reticulum membrane. It catalyses the reaction a di-trans,poly-cis-dolichyl phosphate + UDP-alpha-D-glucose = a di-trans,poly-cis-dolichyl beta-D-glucosyl phosphate + UDP. The protein operates within protein modification; protein glycosylation. Its function is as follows. Endoplasmic reticulum membrane-bound UDP-glucose:dolichyl-phosphate glucosyltransferase involved in protein N-linked glycosylation. This Dictyostelium discoideum (Social amoeba) protein is Dolichyl-phosphate beta-glucosyltransferase (alg5).